A 1230-amino-acid chain; its full sequence is Serine/threonine-protein kinase PDK1 (1230 aa).

A disordered region spans residues 1 to 277; the sequence is MASSHFGPAS…ASSGALKKHS (277 aa). Residues 34-50 are compositionally biased toward low complexity; sequence SSSSSSRSTTTCSSTSS. The segment covering 62-76 has biased composition (polar residues); it reads ETSTAATSRSQLPSN. Positions 77 to 87 are enriched in basic and acidic residues; it reads RHSENEAEHDT. 2 stretches are compositionally biased toward polar residues: residues 107–117 and 140–175; these read PRSNRLGTSPQ and SKRQ…SSTI. Positions 185–202 are enriched in basic and acidic residues; the sequence is PNDRLSHDRESHSAERPR. Over residues 217 to 226 the composition is skewed to polar residues; the sequence is STPSSPTNSY. Positions 252-262 are enriched in basic and acidic residues; that stretch reads ARDGDDRERRQ. Residues 281 to 801 enclose the Protein kinase domain; sequence WVLGEELGVG…ITFIKTHPFF (521 aa). ATP-binding positions include 291-293 and Lys-319; that span reads SYS. Disordered regions lie at residues 345–522 and 534–597; these read LSDP…RSGA and TLPP…KMSA. Polar residues-rich tracts occupy residues 378-397 and 408-433; these read TASI…TVSN and IVTT…SPTA. Composition is skewed to basic and acidic residues over residues 466–494 and 502–521; these read GGED…DNMT and VREE…ERSG. Positions 535–544 are enriched in pro residues; sequence LPPPQIPSTP. Residues 555-569 are compositionally biased toward basic and acidic residues; the sequence is DGHRTSRETPRDRPH. ATP-binding positions include 621–623 and Glu-627; that span reads SLA. The Proton acceptor role is filled by Asp-666. ATP contacts are provided by Glu-670 and Asp-684. The span at 850 to 859 shows a compositional bias: acidic residues; the sequence is EDEDGFEYDA. Disordered stretches follow at residues 850–871, 907–955, 972–1035, and 1116–1152; these read EDED…GGAV, LGED…GGNR, GGGM…SDEA, and EADG…GGGH. Residues 927–942 are compositionally biased toward basic and acidic residues; that stretch reads GKREKEVEKKKGEKAR. Composition is skewed to low complexity over residues 977 to 992, 1002 to 1030, and 1120 to 1137; these read GSAT…RTPG, RPGS…GASM, and DPAG…SHVE. Residues 1138-1152 show a composition bias toward gly residues; that stretch reads SGGGGVGGGGRGGGH.

It belongs to the protein kinase superfamily. AGC Ser/Thr protein kinase family. PDPK1 subfamily.

It carries out the reaction L-seryl-[protein] + ATP = O-phospho-L-seryl-[protein] + ADP + H(+). The catalysed reaction is L-threonyl-[protein] + ATP = O-phospho-L-threonyl-[protein] + ADP + H(+). In terms of biological role, serine/threonine-protein kinase that functions in the sphingolipid-mediated signaling pathway, regulating organization of the plasma membrane. May phosphorylate PKC1 to activate the cell integrity MAPK cascade during cell wall and membrane stress. May regulate sphingolipid metabolism upstream of YPK1. This Cryptococcus neoformans var. grubii serotype A (strain H99 / ATCC 208821 / CBS 10515 / FGSC 9487) (Filobasidiella neoformans var. grubii) protein is Serine/threonine-protein kinase PDK1.